Consider the following 255-residue polypeptide: Triosephosphate isomerase (255 aa).

Position 9 to 11 (9 to 11 (NWK)) interacts with substrate. H95 acts as the Electrophile in catalysis. Catalysis depends on E167, which acts as the Proton acceptor. Residues G173, S212, and 233 to 234 (GG) each bind substrate.

Belongs to the triosephosphate isomerase family. In terms of assembly, homodimer.

It is found in the cytoplasm. It catalyses the reaction D-glyceraldehyde 3-phosphate = dihydroxyacetone phosphate. The protein operates within carbohydrate biosynthesis; gluconeogenesis. It functions in the pathway carbohydrate degradation; glycolysis; D-glyceraldehyde 3-phosphate from glycerone phosphate: step 1/1. Involved in the gluconeogenesis. Catalyzes stereospecifically the conversion of dihydroxyacetone phosphate (DHAP) to D-glyceraldehyde-3-phosphate (G3P). This Serratia proteamaculans (strain 568) protein is Triosephosphate isomerase.